A 418-amino-acid polypeptide reads, in one-letter code: MAKLLQQPPKFLRAEWQIANKNQYHRAEAQRSRSERLVAESQRLVDEIEKTTRKSQSDVNKKLEQRLEEVRFWKKELDDKLEQLVYATEDLLLYQTRLQKALESFKEPLHITEKCLEYREKRVGIDLVHDEVEQELIKEHEIIRGVMTLLTRTLEETCEQIRLNRSAKYNLEKDLRDKFTAITIDDICFSLNNNSPNIKYSENVVRVEPNSVSLEDWLDFSNTNVEKADKQRNNSLTLKALVDRILFQTASDLRRQCDVVDTAFKNGLKETKDARDKLALHLDKVMEEIASQEKNIVVLEKAILDQEGPAKVAHTRLETRTHRPNVELCRDVAQYRLIKEVDEITHNVARLKETLAQAHVELKGLNRRQLALQEEIQIKENTIYIDEVLCVPMRKSIPPRDGDDHGEWAGGSHPEAVC.

Coiled-coil stretches lie at residues 21–84 (KNQY…LEQL), 268–308 (LKET…DQEG), and 336–383 (RLIK…ENTI). A disordered region spans residues 399–418 (PRDGDDHGEWAGGSHPEAVC).

This sequence belongs to the tektin family. Microtubule inner protein component of sperm flagellar doublet microtubules. Post-translationally, ubiquitinated, leading to its degradation. Deubiquitinated by USP16, promoting its stability. Expressed in trachea multiciliated cells.

The protein localises to the cytoplasm. Its subcellular location is the cytoskeleton. It is found in the cilium axoneme. The protein resides in the flagellum axoneme. Microtubule inner protein (MIP) part of the dynein-decorated doublet microtubules (DMTs) in cilia and flagellar axoneme. Forms filamentous polymers in the walls of ciliary and flagellar microtubules. This chain is Tektin-1 (TEKT1), found in Bos taurus (Bovine).